The primary structure comprises 88 residues: Phosphocarrier protein HPr (88 aa).

The 88-residue stretch at 1 to 88 (MEQNSYVIID…DVLSKEGLTK (88 aa)) folds into the HPr domain. H15 functions as the Pros-phosphohistidine intermediate in the catalytic mechanism. Residue S46 is modified to Phosphoserine; by HPrK/P.

The protein localises to the cytoplasm. Phosphorylation on Ser-46 inhibits the phosphoryl transfer from enzyme I to HPr. Functionally, general (non sugar-specific) component of the phosphoenolpyruvate-dependent sugar phosphotransferase system (sugar PTS). This major carbohydrate active-transport system catalyzes the phosphorylation of incoming sugar substrates concomitantly with their translocation across the cell membrane. The phosphoryl group from phosphoenolpyruvate (PEP) is transferred to the phosphoryl carrier protein HPr by enzyme I. Phospho-HPr then transfers it to the PTS EIIA domain. P-Ser-HPr interacts with the catabolite control protein A (CcpA), forming a complex that binds to DNA at the catabolite response elements cre, operator sites preceding a large number of catabolite-regulated genes. Thus, P-Ser-HPr is a corepressor in carbon catabolite repression (CCR), a mechanism that allows bacteria to coordinate and optimize the utilization of available carbon sources. P-Ser-HPr also plays a role in inducer exclusion, in which it probably interacts with several non-PTS permeases and inhibits their transport activity. This is Phosphocarrier protein HPr (ptsH) from Staphylococcus aureus (strain MSSA476).